The following is a 402-amino-acid chain: Putative F-box/kelch-repeat protein At1g61540 (402 aa).

An F-box domain is found at 24–70; the sequence is PISIMSLPYDLLLNCFSLVSRLYYPTLSLVSKTFRSIITSRELYEIR. 3 Kelch repeats span residues 135–189, 191–240, and 246–293; these read NIYK…CEVD, KIYI…EVKS, and KIYM…VVDN.

The polypeptide is Putative F-box/kelch-repeat protein At1g61540 (Arabidopsis thaliana (Mouse-ear cress)).